Reading from the N-terminus, the 1603-residue chain is Transcription factor Gibbin (1603 aa).

4 disordered regions span residues 19-108 (PDYL…SSSR), 150-236 (LRLS…STDY), 264-285 (LEPPSPEPEPQLLDPQPRFLDP), and 394-467 (CRRR…RKGK). Pro residues predominate over residues 30 to 47 (GGPPTPRPLLPTRPPASP). Lys79 bears the N6-acetyllysine mark. Polar residues predominate over residues 166-178 (SFFSSPSLANSIR). Over residues 179–194 (SPEERATPHAKSERPS) the composition is skewed to basic and acidic residues. The segment covering 216 to 225 (PGATAAATGL) has biased composition (low complexity). Phosphoserine is present on Ser268. Positions 273–285 (PQLLDPQPRFLDP) are enriched in low complexity. A DNA-binding region (a.T hook 1) is located at residues 396 to 408 (RRKAGRGRKADAG). The segment covering 428-446 (EPPPPPPPPPPALPGPGPV) has biased composition (pro residues). Positions 544-556 (KRKRGRPPKNLLL) form a DNA-binding region, a.T hook 2. The tract at residues 581–607 (MPEVKKRRRRKQKLASPQPSYAADAND) is disordered. The residue at position 596 (Ser596) is a Phosphoserine. Lys609 is covalently cross-linked (Glycyl lysine isopeptide (Lys-Gly) (interchain with G-Cter in SUMO2)). Disordered regions lie at residues 717-792 (LTEL…RNCG) and 806-827 (LESGASGRGSYYSTGAPSGQTE). The segment covering 737 to 746 (KPKRKRRSRK) has biased composition (basic residues). Polar residues predominate over residues 816-827 (YYSTGAPSGQTE). Phosphoserine occurs at positions 829 and 846. Residue Arg891 is modified to Omega-N-methylarginine. Ser896 and Ser1064 each carry phosphoserine. 2 disordered regions span residues 1159–1198 (VSETFSESSSDSTQFNQPVGGGGFRRANSEASSSEGQSSL) and 1253–1286 (ASAAASGYPSKRSTGPRQPRGGRGGGACSAKKER). Low complexity-rich tracts occupy residues 1160 to 1171 (SETFSESSSDST) and 1187 to 1198 (SEASSSEGQSSL). Ser1187 is subject to Phosphoserine. Ser1322, Ser1324, and Ser1399 each carry phosphoserine. Phosphothreonine is present on Thr1401. Ser1403 is modified (phosphoserine). A Glycyl lysine isopeptide (Lys-Gly) (interchain with G-Cter in SUMO2) cross-link involves residue Lys1409. The disordered stretch occupies residues 1503 to 1533 (PHLASPPATPKADKEPLEMARPPGPPRGPAA). Residues Ser1507 and Ser1549 each carry the phosphoserine modification.

The protein localises to the nucleus. It localises to the chromosome. Functionally, transcription factor required for the proper patterning of the epidermis, which plays a key role in early epithelial morphogenesis. Directly binds promoter and enhancer regions and acts by maintaining local enhancer-promoter chromatin architecture. Interacts with many sequence-specific zinc-finger transcription factors and methyl-CpG-binding proteins to regulate the expression of mesoderm genes that wire surface ectoderm stratification. This is Transcription factor Gibbin from Homo sapiens (Human).